The sequence spans 309 residues: DDRGK domain-containing protein 1 (309 aa).

Residues 1–2 (MD) lie on the Lumenal side of the membrane. The helical transmembrane segment at 3–23 (LIILVGIAVALLVVIVTLYLL) threads the bilayer. Topologically, residues 24 to 309 (QKKNAAPETK…ISAGGGEASS (286 aa)) are cytoplasmic. Disordered regions lie at residues 32-53 (TKVA…VPRR) and 79-175 (ALPA…KEER). Acidic residues predominate over residues 87 to 96 (DHEDEGQVDG). Over residues 107–175 (LDEKMGAKKR…DAERLAKEER (69 aa)) the composition is skewed to basic and acidic residues. Residues 120-177 (EAKEQKRLQREQELHDREQRKVKEAKEEAERKQQEDLEAEAERKRVDAERLAKEERER) are a coiled coil.

Belongs to the DDRGK1 family. Interacts with Atg9; the interaction is transient.

The protein localises to the endoplasmic reticulum membrane. In terms of biological role, substrate adapter for ufmylation, the covalent attachment of the ubiquitin-like modifier UFM1 to substrate proteins. Required for ufmylation of Atg9; protects the nervous system during aging, possibly by stabilizing Atg9 and supporting its function. The polypeptide is DDRGK domain-containing protein 1 (Drosophila melanogaster (Fruit fly)).